The following is a 147-amino-acid chain: Hemoglobin subunit beta (147 aa).

Position 2 is an N-acetylvaline (V2). The 145-residue stretch at 3 to 147 (HLTGDEKAAV…VANALAHKYH (145 aa)) folds into the Globin domain. The residue at position 13 (T13) is a Phosphothreonine. The residue at position 45 (S45) is a Phosphoserine. An N6-acetyllysine modification is found at K60. H64 provides a ligand contact to heme b. K83 carries the post-translational modification N6-acetyllysine. H93 is a binding site for heme b. C94 is modified (S-nitrosocysteine). N6-acetyllysine is present on K145.

This sequence belongs to the globin family. In terms of assembly, heterotetramer of two alpha chains and two beta chains. Red blood cells.

Involved in oxygen transport from the lung to the various peripheral tissues. The chain is Hemoglobin subunit beta (HBB) from Saimiri sciureus (Common squirrel monkey).